Consider the following 362-residue polypeptide: UDP-N-acetylglucosamine--N-acetylmuramyl-(pentapeptide) pyrophosphoryl-undecaprenol N-acetylglucosamine transferase (362 aa).

UDP-N-acetyl-alpha-D-glucosamine contacts are provided by arginine 166, serine 196, and glutamine 290.

It belongs to the glycosyltransferase 28 family. MurG subfamily.

The protein localises to the cell membrane. The catalysed reaction is Mur2Ac(oyl-L-Ala-gamma-D-Glu-L-Lys-D-Ala-D-Ala)-di-trans,octa-cis-undecaprenyl diphosphate + UDP-N-acetyl-alpha-D-glucosamine = beta-D-GlcNAc-(1-&gt;4)-Mur2Ac(oyl-L-Ala-gamma-D-Glu-L-Lys-D-Ala-D-Ala)-di-trans,octa-cis-undecaprenyl diphosphate + UDP + H(+). The protein operates within cell wall biogenesis; peptidoglycan biosynthesis. Functionally, cell wall formation. Catalyzes the transfer of a GlcNAc subunit on undecaprenyl-pyrophosphoryl-MurNAc-pentapeptide (lipid intermediate I) to form undecaprenyl-pyrophosphoryl-MurNAc-(pentapeptide)GlcNAc (lipid intermediate II). The chain is UDP-N-acetylglucosamine--N-acetylmuramyl-(pentapeptide) pyrophosphoryl-undecaprenol N-acetylglucosamine transferase from Staphylococcus carnosus (strain TM300).